The sequence spans 309 residues: MSTVLVFGHKNPDTDTITSALAYAELKKKLGMDAEAVRLGEVNGETQYALDHFRVKAPRLIESVKGEAEEVILVDHNEFQQSADGIEDVRILEVIDHHRIANFQTADPLYYRAEPVGCTATILLKLYKEHGVEIAADMAGLMLSAIISDSLLFKSPTCTDEDIKAAKELAEIAGVDAETYGLEMLKAGADLSQKTIEELISLDAKEFAMGDYRVEIAQVNTVDANDVLNRKAEVEAAIANTVAAKNLDLFVFAITNILTNDSEAIVVGPKPELFEQAFNVTLQNGLATLPGVVSRKKQIVPFLTEAATK.

Residues H9, D13, D15, D75, H97, and D149 each coordinate Mn(2+).

The protein belongs to the PPase class C family. Mn(2+) is required as a cofactor.

It is found in the cytoplasm. The enzyme catalyses diphosphate + H2O = 2 phosphate + H(+). In Exiguobacterium sp. (strain ATCC BAA-1283 / AT1b), this protein is Probable manganese-dependent inorganic pyrophosphatase.